Here is a 288-residue protein sequence, read N- to C-terminus: ATP synthase gamma chain (288 aa).

It belongs to the ATPase gamma chain family. F-type ATPases have 2 components, CF(1) - the catalytic core - and CF(0) - the membrane proton channel. CF(1) has five subunits: alpha(3), beta(3), gamma(1), delta(1), epsilon(1). CF(0) has three main subunits: a, b and c.

It is found in the cell inner membrane. Produces ATP from ADP in the presence of a proton gradient across the membrane. The gamma chain is believed to be important in regulating ATPase activity and the flow of protons through the CF(0) complex. This is ATP synthase gamma chain from Blochmanniella floridana.